Consider the following 138-residue polypeptide: Acidic phospholipase A2 2 (138 aa).

The N-terminal stretch at 1 to 16 is a signal peptide; it reads MRTLWIVAVLLLGVEG. 7 disulfides stabilise this stretch: cysteine 42/cysteine 131, cysteine 44/cysteine 60, cysteine 59/cysteine 111, cysteine 65/cysteine 138, cysteine 66/cysteine 104, cysteine 73/cysteine 97, and cysteine 91/cysteine 102. Residues tyrosine 43, glycine 45, and glycine 47 each contribute to the Ca(2+) site. Histidine 63 is an active-site residue. Ca(2+) is bound at residue aspartate 64. Aspartate 105 is an active-site residue.

The protein belongs to the phospholipase A2 family. Group II subfamily. D49 sub-subfamily. Ca(2+) is required as a cofactor. Expressed by the venom gland.

It is found in the secreted. It catalyses the reaction a 1,2-diacyl-sn-glycero-3-phosphocholine + H2O = a 1-acyl-sn-glycero-3-phosphocholine + a fatty acid + H(+). In terms of biological role, snake venom phospholipase A2 (PLA2) that displays edema-inducing activities, exhibits indirect hemolytic activity, and inhibits ADP-induced platelet aggregation. PLA2 catalyzes the calcium-dependent hydrolysis of the 2-acyl groups in 3-sn-phosphoglycerides. This Protobothrops mucrosquamatus (Taiwan habu) protein is Acidic phospholipase A2 2.